The following is a 605-amino-acid chain: Adenine deaminase (605 aa).

It belongs to the metallo-dependent hydrolases superfamily. Adenine deaminase family. Requires Mn(2+) as cofactor.

It catalyses the reaction adenine + H2O + H(+) = hypoxanthine + NH4(+). The sequence is that of Adenine deaminase from Mesorhizobium japonicum (strain LMG 29417 / CECT 9101 / MAFF 303099) (Mesorhizobium loti (strain MAFF 303099)).